Here is a 283-residue protein sequence, read N- to C-terminus: Glutamyl-Q tRNA(Asp) synthetase (283 aa).

Residues 5 to 9 (RFAPT) and E41 each bind L-glutamate. The 'HIGH' region signature appears at 8–18 (PTPSGPLHLGS). Positions 97, 99, 111, and 115 each coordinate Zn(2+). 2 residues coordinate L-glutamate: Y168 and R186. Residues 224–228 (KLSKQ) carry the 'KMSKS' region motif. ATP is bound at residue K227.

It belongs to the class-I aminoacyl-tRNA synthetase family. GluQ subfamily. It depends on Zn(2+) as a cofactor.

In terms of biological role, catalyzes the tRNA-independent activation of glutamate in presence of ATP and the subsequent transfer of glutamate onto a tRNA(Asp). Glutamate is transferred on the 2-amino-5-(4,5-dihydroxy-2-cyclopenten-1-yl) moiety of the queuosine in the wobble position of the QUC anticodon. This Idiomarina loihiensis (strain ATCC BAA-735 / DSM 15497 / L2-TR) protein is Glutamyl-Q tRNA(Asp) synthetase.